The primary structure comprises 703 residues: Glycogen [starch] synthase, liver (703 aa).

Position 8 is a phosphoserine; by PKA (Ser-8). Phosphoserine is present on Ser-11. UDP is bound at residue Lys-40. UDP-alpha-D-glucose contacts are provided by His-205 and Arg-211. His-291, Glu-292, Gln-294, His-297, and Lys-301 together coordinate alpha-D-glucose 6-phosphate. Arg-331 provides a ligand contact to UDP. Position 331 (Arg-331) interacts with UDP-alpha-D-glucose. His-501 serves as a coordination point for alpha-D-glucose 6-phosphate. The UDP-alpha-D-glucose site is built by Glu-510, Trp-512, and Gly-513. Position 515 (Thr-515) interacts with UDP. Alpha-D-glucose 6-phosphate is bound by residues Arg-582 and Arg-586. Ser-627 is modified (phosphoserine). Residues 628–703 (PPTTEGFKYP…KKKLHGEYKN (76 aa)) are disordered. Phosphoserine; by GSK3-alpha and GSK3-beta occurs at positions 641, 645, 649, and 653. The segment covering 647–657 (SGSQASSPQSS) has biased composition (low complexity). Ser-657 carries the post-translational modification Phosphoserine; by CK2. A compositionally biased stretch (acidic residues) spans 658–674 (DVEDEVEDERYDEEEEA). Ser-683 carries the phosphoserine modification.

The protein belongs to the glycosyltransferase 3 family. As to quaternary structure, part of the glycogen synthase (GS)-glycogenin complex, a heterooctamer composed of a tetramer of GS and 2 dimers of glycogenin, where each GS protomer binds to one glycogenin subunit (via glycogenin C-terminus); the GS tetramer may dissociate from glycogenin dimers to continue glycogen polymerization on its own. May also form a heterooctamer complex with GYG1 (via GYG1 C-terminus). Primed phosphorylation at Ser-657 (site 5) by CSNK2A1 and CSNK2A2 is required for inhibitory phosphorylation at Ser-641 (site 3a), Ser-645 (site 3b), Ser-649 (site 3c) and Ser-653 (site 4) by GSK3A an GSK3B. Dephosphorylation at Ser-641 and Ser-645 by PP1 activates the enzyme. Phosphorylation at Ser-8 is not required for interaction with GYG1. Interaction with GYG1 does not regulate the phosphorylation at Ser-8 and Ser-641. As to expression, specifically expressed in liver (at protein level).

It carries out the reaction [(1-&gt;4)-alpha-D-glucosyl](n) + UDP-alpha-D-glucose = [(1-&gt;4)-alpha-D-glucosyl](n+1) + UDP + H(+). It functions in the pathway glycan biosynthesis; glycogen biosynthesis. Its activity is regulated as follows. Allosteric activation by glucose-6-phosphate. Phosphorylation reduces the activity towards UDP-glucose. When in the non-phosphorylated state, glycogen synthase does not require glucose-6-phosphate as an allosteric activator; when phosphorylated it does. Glycogen synthase participates in the glycogen biosynthetic process along with glycogenin and glycogen branching enzyme. Extends the primer composed of a few glucose units formed by glycogenin by adding new glucose units to it. In this context, glycogen synthase transfers the glycosyl residue from UDP-Glc to the non-reducing end of alpha-1,4-glucan. This is Glycogen [starch] synthase, liver from Homo sapiens (Human).